A 449-amino-acid chain; its full sequence is tRNA-2-methylthio-N(6)-dimethylallyladenosine synthase (449 aa).

In terms of domain architecture, MTTase N-terminal spans 3–118 (KKVFVKTFGC…LPELLAQREA (116 aa)). Cysteine 12, cysteine 49, cysteine 81, cysteine 155, cysteine 159, and cysteine 162 together coordinate [4Fe-4S] cluster. The Radical SAM core domain occupies 141-376 (RVEGASAFVS…VINANIKSIS (236 aa)). Residues 377-440 (ESRVGTVQRI…AYTLRGEVVT (64 aa)) enclose the TRAM domain.

This sequence belongs to the methylthiotransferase family. MiaB subfamily. As to quaternary structure, monomer. Requires [4Fe-4S] cluster as cofactor.

It is found in the cytoplasm. The catalysed reaction is N(6)-dimethylallyladenosine(37) in tRNA + (sulfur carrier)-SH + AH2 + 2 S-adenosyl-L-methionine = 2-methylsulfanyl-N(6)-dimethylallyladenosine(37) in tRNA + (sulfur carrier)-H + 5'-deoxyadenosine + L-methionine + A + S-adenosyl-L-homocysteine + 2 H(+). Its function is as follows. Catalyzes the methylthiolation of N6-(dimethylallyl)adenosine (i(6)A), leading to the formation of 2-methylthio-N6-(dimethylallyl)adenosine (ms(2)i(6)A) at position 37 in tRNAs that read codons beginning with uridine. The sequence is that of tRNA-2-methylthio-N(6)-dimethylallyladenosine synthase from Paracidovorax citrulli (strain AAC00-1) (Acidovorax citrulli).